The sequence spans 344 residues: Adenosine kinase (344 aa).

Asp298 is a catalytic residue.

This sequence belongs to the carbohydrate kinase PfkB family. It depends on Mg(2+) as a cofactor.

The catalysed reaction is adenosine + ATP = AMP + ADP + H(+). It participates in purine metabolism; AMP biosynthesis via salvage pathway; AMP from adenosine: step 1/1. The sequence is that of Adenosine kinase (ADK) from Schizophyllum commune (Split gill fungus).